Here is a 242-residue protein sequence, read N- to C-terminus: MAKRGKKYLKALELVDKDKLYSIEEAVETLKKMEEVLQRKFDETVELIFRLGVDPKYADQMVRGSVVLPHGLGKELKVLVITQGEKVKEAEEAGADYVGGEDMINKILNENWLDFDVVIATPDMMPKVAKLGRVLGPRGLMPNPKVGTVTQDVKKAVTEAKKGRVEFKVDKTGNLHVPIGKISFDNNKLVENALEVIETVQKLRPSGLKGQYIKNMVMKTTMSPSVKLDVLSILRSLEAKAA.

It belongs to the universal ribosomal protein uL1 family. In terms of assembly, part of the 50S ribosomal subunit.

In terms of biological role, binds directly to 23S rRNA. The L1 stalk is quite mobile in the ribosome, and is involved in E site tRNA release. Protein L1 is also a translational repressor protein, it controls the translation of the L11 operon by binding to its mRNA. This Persephonella marina (strain DSM 14350 / EX-H1) protein is Large ribosomal subunit protein uL1.